The chain runs to 277 residues: Large ribosomal subunit protein uL2 (277 aa).

The segment at 219 to 277 (TVRGSVMNPNDHPHGGGEGKAPVGRKAPSTPWGKPALGLKTRNKKAKSDKLIVRRRNEK) is disordered. The segment covering 264–277 (AKSDKLIVRRRNEK) has biased composition (basic and acidic residues).

This sequence belongs to the universal ribosomal protein uL2 family. In terms of assembly, part of the 50S ribosomal subunit. Forms a bridge to the 30S subunit in the 70S ribosome.

In terms of biological role, one of the primary rRNA binding proteins. Required for association of the 30S and 50S subunits to form the 70S ribosome, for tRNA binding and peptide bond formation. It has been suggested to have peptidyltransferase activity; this is somewhat controversial. Makes several contacts with the 16S rRNA in the 70S ribosome. The chain is Large ribosomal subunit protein uL2 from Streptococcus gordonii (strain Challis / ATCC 35105 / BCRC 15272 / CH1 / DL1 / V288).